The primary structure comprises 607 residues: Elongation factor 4 (607 aa).

The tr-type G domain maps to 11-193 (SRIRNFSIIA…QVVEKVPAPA (183 aa)). Residues 23–28 (DHGKST) and 140–143 (NKID) each bind GTP.

It belongs to the TRAFAC class translation factor GTPase superfamily. Classic translation factor GTPase family. LepA subfamily.

It localises to the cell membrane. The catalysed reaction is GTP + H2O = GDP + phosphate + H(+). Functionally, required for accurate and efficient protein synthesis under certain stress conditions. May act as a fidelity factor of the translation reaction, by catalyzing a one-codon backward translocation of tRNAs on improperly translocated ribosomes. Back-translocation proceeds from a post-translocation (POST) complex to a pre-translocation (PRE) complex, thus giving elongation factor G a second chance to translocate the tRNAs correctly. Binds to ribosomes in a GTP-dependent manner. This is Elongation factor 4 from Shouchella clausii (strain KSM-K16) (Alkalihalobacillus clausii).